Here is a 31-residue protein sequence, read N- to C-terminus: Jingzhaotoxin F7-15.33 (31 aa).

Intrachain disulfides connect C2–C16, C9–C21, and C15–C28.

Belongs to the neurotoxin 10 (Hwtx-1) family. Expressed by the venom gland.

It localises to the secreted. Functionally, probable ion channel inhibitor. This Chilobrachys guangxiensis (Chinese earth tiger tarantula) protein is Jingzhaotoxin F7-15.33.